A 329-amino-acid chain; its full sequence is Transposable element Tc3 transposase (329 aa).

Residues 2 to 135 (PRGSALSDTE…LEFAKNNMGT (134 aa)) mediate DNA binding.

This sequence belongs to the transposase 5 family. In terms of assembly, homodimer or homotetramer.

Its subcellular location is the nucleus. Functionally, binds specifically to the terminal nucleotides of the TC3 inverted repeat. Its expression results in frequent excision and transposition of endogenous TC3 elements. TC3 transposase acts by making double strand breaks at the ends of TC3 element. The excised element would then be inserted into a target sequence. The polypeptide is Transposable element Tc3 transposase (tc3a) (Caenorhabditis elegans).